A 314-amino-acid polypeptide reads, in one-letter code: Lipoyl synthase (314 aa).

The [4Fe-4S] cluster site is built by Cys-60, Cys-65, Cys-71, Cys-86, Cys-90, Cys-93, and Ser-300. One can recognise a Radical SAM core domain in the interval 72 to 289 (FRKGTATFMI…RQFGLSIGFS (218 aa)).

It belongs to the radical SAM superfamily. Lipoyl synthase family. [4Fe-4S] cluster is required as a cofactor.

It localises to the cytoplasm. It catalyses the reaction [[Fe-S] cluster scaffold protein carrying a second [4Fe-4S](2+) cluster] + N(6)-octanoyl-L-lysyl-[protein] + 2 oxidized [2Fe-2S]-[ferredoxin] + 2 S-adenosyl-L-methionine + 4 H(+) = [[Fe-S] cluster scaffold protein] + N(6)-[(R)-dihydrolipoyl]-L-lysyl-[protein] + 4 Fe(3+) + 2 hydrogen sulfide + 2 5'-deoxyadenosine + 2 L-methionine + 2 reduced [2Fe-2S]-[ferredoxin]. The protein operates within protein modification; protein lipoylation via endogenous pathway; protein N(6)-(lipoyl)lysine from octanoyl-[acyl-carrier-protein]: step 2/2. Catalyzes the radical-mediated insertion of two sulfur atoms into the C-6 and C-8 positions of the octanoyl moiety bound to the lipoyl domains of lipoate-dependent enzymes, thereby converting the octanoylated domains into lipoylated derivatives. The chain is Lipoyl synthase from Pelobacter propionicus (strain DSM 2379 / NBRC 103807 / OttBd1).